We begin with the raw amino-acid sequence, 89 residues long: Small ribosomal subunit protein uS15c (89 aa).

It belongs to the universal ribosomal protein uS15 family. Part of the 30S ribosomal subunit.

It is found in the plastid. The sequence is that of Small ribosomal subunit protein uS15c (rps15) from Aneura mirabilis (Parasitic liverwort).